The sequence spans 235 residues: Orotidine 5'-phosphate decarboxylase (235 aa).

Substrate contacts are provided by residues Asp-12, Lys-34, 61 to 70 (DMKLLDIDNT), Thr-116, Arg-177, Gln-186, and Arg-207. Lys-63 (proton donor) is an active-site residue.

The protein belongs to the OMP decarboxylase family. Type 1 subfamily. In terms of assembly, homodimer.

It carries out the reaction orotidine 5'-phosphate + H(+) = UMP + CO2. The protein operates within pyrimidine metabolism; UMP biosynthesis via de novo pathway; UMP from orotate: step 2/2. Its function is as follows. Catalyzes the decarboxylation of orotidine 5'-monophosphate (OMP) to uridine 5'-monophosphate (UMP). This Rhizobium leguminosarum bv. trifolii (strain WSM2304) protein is Orotidine 5'-phosphate decarboxylase.